The chain runs to 146 residues: 3-dehydroquinate dehydratase (146 aa).

Catalysis depends on Y22, which acts as the Proton acceptor. Substrate contacts are provided by N74, H80, and D87. The Proton donor role is filled by H100. Residues 101–102 (LS) and R111 contribute to the substrate site.

The protein belongs to the type-II 3-dehydroquinase family. Homododecamer.

The enzyme catalyses 3-dehydroquinate = 3-dehydroshikimate + H2O. It participates in metabolic intermediate biosynthesis; chorismate biosynthesis; chorismate from D-erythrose 4-phosphate and phosphoenolpyruvate: step 3/7. In terms of biological role, catalyzes a trans-dehydration via an enolate intermediate. This is 3-dehydroquinate dehydratase from Clostridium beijerinckii (strain ATCC 51743 / NCIMB 8052) (Clostridium acetobutylicum).